Here is a 195-residue protein sequence, read N- to C-terminus: Cell division protein SepF (195 aa).

Positions 32–54 are disordered; the sequence is RYSKTNSSETLAPEEEEPIRNRR.

This sequence belongs to the SepF family. As to quaternary structure, homodimer. Interacts with FtsZ.

It is found in the cytoplasm. In terms of biological role, cell division protein that is part of the divisome complex and is recruited early to the Z-ring. Probably stimulates Z-ring formation, perhaps through the cross-linking of FtsZ protofilaments. Its function overlaps with FtsA. The chain is Cell division protein SepF from Gloeothece citriformis (strain PCC 7424) (Cyanothece sp. (strain PCC 7424)).